A 520-amino-acid polypeptide reads, in one-letter code: Probable protein phosphatase 2C 39 (520 aa).

A PPM-type phosphatase domain is found at 160–507 (FLTSTEIKMA…DDVTIIVIIL (348 aa)). Positions 195, 196, 435, and 498 each coordinate Mn(2+).

The protein belongs to the PP2C family. Mg(2+) serves as cofactor. Mn(2+) is required as a cofactor.

The catalysed reaction is O-phospho-L-seryl-[protein] + H2O = L-seryl-[protein] + phosphate. It carries out the reaction O-phospho-L-threonyl-[protein] + H2O = L-threonyl-[protein] + phosphate. The chain is Probable protein phosphatase 2C 39 from Oryza sativa subsp. japonica (Rice).